We begin with the raw amino-acid sequence, 493 residues long: Probable cytochrome P450 313a2 (493 aa).

Cys-438 lines the heme pocket.

The protein belongs to the cytochrome P450 family. Heme is required as a cofactor.

It localises to the endoplasmic reticulum membrane. The protein localises to the microsome membrane. Functionally, may be involved in the metabolism of insect hormones and in the breakdown of synthetic insecticides. This Drosophila melanogaster (Fruit fly) protein is Probable cytochrome P450 313a2 (Cyp313a2).